Here is a 512-residue protein sequence, read N- to C-terminus: Maturase K (512 aa).

The protein belongs to the intron maturase 2 family. MatK subfamily.

It localises to the plastid. It is found in the chloroplast. Its function is as follows. Usually encoded in the trnK tRNA gene intron. Probably assists in splicing its own and other chloroplast group II introns. The chain is Maturase K from Wolffiella gladiata (Florida mud-midget).